The sequence spans 706 residues: Protein psiG (706 aa).

The first 23 residues, 1 to 23 (MKIILTLLIILFSLNKNLNFVSS), serve as a signal peptide directing secretion. Residues 24 to 644 (EVTKSRICSI…FVCKPAAIIS (621 aa)) are Extracellular-facing. N-linked (GlcNAc...) asparagine glycosylation is found at Asn-95, Asn-107, Asn-212, Asn-296, Asn-429, Asn-521, Asn-532, and Asn-616. In terms of domain architecture, PA14 spans 109-253 (TLDKSSNIYS…SDYCGVCQGD (145 aa)). The chain crosses the membrane as a helical span at residues 645–665 (TSVIVGVSVAAAVVAIAIVVA). Over 666–706 (SKKGYDAWAASNNNSLASLTSNPLYENPTGNGDNPMYQPNS) the chain is Cytoplasmic. Positions 687–706 (NPLYENPTGNGDNPMYQPNS) are disordered. Positions 693-706 (PTGNGDNPMYQPNS) are enriched in polar residues.

It belongs to the prespore-cell-inducing factor family.

The protein resides in the membrane. This Dictyostelium discoideum (Social amoeba) protein is Protein psiG (psiG-1).